A 346-amino-acid polypeptide reads, in one-letter code: Annexin A1 (346 aa).

Ala2 is modified (N-acetylalanine). At Ser5 the chain carries Phosphoserine; by TRPM7. Gln19 is covalently cross-linked (Isoglutamyl lysine isopeptide (Gln-Lys) (interchain with K-?)). Phosphotyrosine; by EGFR is present on Tyr21. Ser27 is subject to Phosphoserine; by PKC. Phosphoserine occurs at positions 34 and 37. Thr41 bears the Phosphothreonine mark. Annexin repeat units lie at residues 42 to 113 (FNPS…ALLK), 114 to 185 (TPAQ…SLAK), 197 to 269 (DLAD…AIVK), and 273 to 344 (SKPA…ALCG). N6-acetyllysine is present on Lys58. Ca(2+) contacts are provided by Gly59, Val60, Glu62, Lys97, Leu100, Glu105, Met127, Gly129, Gly131, Thr132, and Glu134. The residue at position 136 (Thr136) is a Phosphothreonine. Positions 171, 210, and 213 each coordinate Ca(2+). Lys214 participates in a covalent cross-link: Glycyl lysine isopeptide (Lys-Gly) (interchain with G-Cter in SUMO1); alternate. Lys214 participates in a covalent cross-link: Glycyl lysine isopeptide (Lys-Gly) (interchain with G-Cter in SUMO2); alternate. Position 215 (Gly215) interacts with Ca(2+). The residue at position 239 (Lys239) is an N6-acetyllysine. Residues Asp253, Glu255, and Leu256 each contribute to the Ca(2+) site. Lys257 is covalently cross-linked (Glycyl lysine isopeptide (Lys-Gly) (interchain with G-Cter in SUMO1)). Ca(2+) is bound by residues Glu261, Met286, Gly288, and Gly290. The residue at position 312 (Lys312) is an N6-acetyllysine. Cys324 and Cys343 form a disulfide bridge. 3 residues coordinate Ca(2+): Leu328, Glu330, and Thr331. Residue Lys332 forms a Glycyl lysine isopeptide (Lys-Gly) (interchain with G-Cter in SUMO1) linkage. A Ca(2+)-binding site is contributed by Glu336.

It belongs to the annexin family. In terms of assembly, homodimer; non-covalently linked. Homodimer; linked by transglutamylation. Homodimers linked by transglutamylation are observed in placenta, but not in other tissues. Interacts with S100A11. Heterotetramer, formed by two molecules each of S100A11 and ANXA1. Interacts with DYSF. Interacts with EGFR. Post-translationally, phosphorylated by protein kinase C, EGFR and TRPM7. Phosphorylated in response to EGF treatment. In terms of processing, sumoylated. Proteolytically cleaved by cathepsin CTSG to release the active N-terminal peptide Ac2-26.

It is found in the nucleus. It localises to the cytoplasm. Its subcellular location is the cell projection. The protein resides in the cilium. The protein localises to the basolateral cell membrane. It is found in the lateral cell membrane. It localises to the cell membrane. Its subcellular location is the apical cell membrane. The protein resides in the membrane. The protein localises to the early endosome. It is found in the cytoplasmic vesicle membrane. It localises to the endosome membrane. Its subcellular location is the secreted. The protein resides in the extracellular space. The protein localises to the extracellular exosome. It is found in the cytoplasmic vesicle. It localises to the secretory vesicle lumen. Its subcellular location is the phagocytic cup. In terms of biological role, plays important roles in the innate immune response as effector of glucocorticoid-mediated responses and regulator of the inflammatory process. Has anti-inflammatory activity. Plays a role in glucocorticoid-mediated down-regulation of the early phase of the inflammatory response. Contributes to the adaptive immune response by enhancing signaling cascades that are triggered by T-cell activation, regulates differentiation and proliferation of activated T-cells. Promotes the differentiation of T-cells into Th1 cells and negatively regulates differentiation into Th2 cells. Has no effect on unstimulated T-cells. Negatively regulates hormone exocytosis via activation of the formyl peptide receptors and reorganization of the actin cytoskeleton. Has high affinity for Ca(2+) and can bind up to eight Ca(2+) ions. Displays Ca(2+)-dependent binding to phospholipid membranes. Plays a role in the formation of phagocytic cups and phagosomes. Plays a role in phagocytosis by mediating the Ca(2+)-dependent interaction between phagosomes and the actin cytoskeleton. Its function is as follows. Functions at least in part by activating the formyl peptide receptors and downstream signaling cascades. Promotes chemotaxis of granulocytes and monocytes via activation of the formyl peptide receptors. Promotes rearrangement of the actin cytoskeleton, cell polarization and cell migration. Promotes resolution of inflammation and wound healing. Acts via neutrophil N-formyl peptide receptors to enhance the release of CXCL2. In Pan troglodytes (Chimpanzee), this protein is Annexin A1 (ANXA1).